A 132-amino-acid chain; its full sequence is Regulator of ribonuclease activity B (132 aa).

This sequence belongs to the RraB family. In terms of assembly, interacts with the C-terminal region of Rne.

The protein localises to the cytoplasm. In terms of biological role, globally modulates RNA abundance by binding to RNase E (Rne) and regulating its endonucleolytic activity. Can modulate Rne action in a substrate-dependent manner by altering the composition of the degradosome. The chain is Regulator of ribonuclease activity B from Alteromonas mediterranea (strain DSM 17117 / CIP 110805 / LMG 28347 / Deep ecotype).